A 255-amino-acid polypeptide reads, in one-letter code: SLA class II histocompatibility antigen, DQ haplotype D alpha chain (255 aa).

Positions 1–23 (MVPGRVLMWGALALTAVMSACGG) are cleaved as a signal peptide. The alpha-1 stretch occupies residues 24 to 120 (EDIAADHVAS…QVPEVTVFPK (97 aa)). Residues 24–217 (EDIAADHVAS…IPAPMSELTE (194 aa)) are Extracellular-facing. N-linked (GlcNAc...) asparagine glycosylation is found at Asn104 and Asn144. The Ig-like C1-type domain occupies 113–205 (PEVTVFPKSP…LDKPLLKHWE (93 aa)). The alpha-2 stretch occupies residues 121–204 (SPVMLGQPNT…GLDKPLLKHW (84 aa)). Cys133 and Cys189 are disulfide-bonded. A connecting peptide region spans residues 205 to 217 (EPEIPAPMSELTE). Residues 218–240 (TVVCALGLIVGLVGIVVGTVFII) form a helical membrane-spanning segment. Over 241–255 (QGLRSGGPSRHQGSL) the chain is Cytoplasmic.

It belongs to the MHC class II family.

It localises to the membrane. The polypeptide is SLA class II histocompatibility antigen, DQ haplotype D alpha chain (Sus scrofa (Pig)).